Reading from the N-terminus, the 406-residue chain is Bifunctional enzyme IspD/IspF (406 aa).

Residues 1 to 247 are 2-C-methyl-D-erythritol 4-phosphate cytidylyltransferase; sequence MSLIRVNGEA…AFFFNPAKDT (247 aa). The segment at 248–406 is 2-C-methyl-D-erythritol 2,4-cyclodiphosphate synthase; sequence FIGMGFDTHA…HVSMRYKQKL (159 aa). Residues Asp254 and His256 each contribute to the a divalent metal cation site. Residues 254 to 256 and 280 to 281 contribute to the 4-CDP-2-C-methyl-D-erythritol 2-phosphate site; these read DTH and HS. His288 lines the a divalent metal cation pocket. Residues 302 to 304, 307 to 311, 378 to 381, Phe385, and Lys388 each bind 4-CDP-2-C-methyl-D-erythritol 2-phosphate; these read DIG, FPDND, and TTME.

It in the N-terminal section; belongs to the IspD/TarI cytidylyltransferase family. IspD subfamily. This sequence in the C-terminal section; belongs to the IspF family. A divalent metal cation is required as a cofactor.

The catalysed reaction is 2-C-methyl-D-erythritol 4-phosphate + CTP + H(+) = 4-CDP-2-C-methyl-D-erythritol + diphosphate. It carries out the reaction 4-CDP-2-C-methyl-D-erythritol 2-phosphate = 2-C-methyl-D-erythritol 2,4-cyclic diphosphate + CMP. It functions in the pathway isoprenoid biosynthesis; isopentenyl diphosphate biosynthesis via DXP pathway; isopentenyl diphosphate from 1-deoxy-D-xylulose 5-phosphate: step 2/6. The protein operates within isoprenoid biosynthesis; isopentenyl diphosphate biosynthesis via DXP pathway; isopentenyl diphosphate from 1-deoxy-D-xylulose 5-phosphate: step 4/6. Bifunctional enzyme that catalyzes the formation of 4-diphosphocytidyl-2-C-methyl-D-erythritol from CTP and 2-C-methyl-D-erythritol 4-phosphate (MEP) (IspD), and catalyzes the conversion of 4-diphosphocytidyl-2-C-methyl-D-erythritol 2-phosphate (CDP-ME2P) to 2-C-methyl-D-erythritol 2,4-cyclodiphosphate (ME-CPP) with a corresponding release of cytidine 5-monophosphate (CMP) (IspF). This is Bifunctional enzyme IspD/IspF from Helicobacter pylori (strain G27).